The chain runs to 463 residues: uncharacterized protein (463 aa).

A TRAM domain is found at 12 to 70; it reads LWQQGSVVELTITGLNHQGEGIGRFNERVVFVPDTAPGDRLEVRLVKVKRNYALAQLLK. [4Fe-4S] cluster-binding residues include cysteine 83, cysteine 89, cysteine 92, and cysteine 171. Residues glutamine 295, tyrosine 324, glutamate 345, and aspartate 390 each coordinate S-adenosyl-L-methionine. Cysteine 417 (nucleophile) is an active-site residue.

Belongs to the class I-like SAM-binding methyltransferase superfamily. RNA M5U methyltransferase family.

This is an uncharacterized protein from Synechocystis sp. (strain ATCC 27184 / PCC 6803 / Kazusa).